Here is a 229-residue protein sequence, read N- to C-terminus: Cytochrome c oxidase subunit 2 (229 aa).

At 1–14 (MPTPNQTNFQDAAS) the chain is on the mitochondrial intermembrane side. The chain crosses the membrane as a helical span at residues 15–45 (PLMEELTHFHDHTLMIVFMISLLVLYILLSM). Residues 46–59 (LSTKLTHTNTANAQ) lie on the Mitochondrial matrix side of the membrane. Residues 60-87 (QAEMVWTILPAIILITIALPSLQILYMM) traverse the membrane as a helical segment. At 88–229 (DEINKPHMTI…DLWLAMIDTL (142 aa)) the chain is on the mitochondrial intermembrane side. His-161, Cys-196, Glu-198, Cys-200, His-204, and Met-207 together coordinate Cu cation. Glu-198 serves as a coordination point for Mg(2+).

It belongs to the cytochrome c oxidase subunit 2 family. Component of the cytochrome c oxidase (complex IV, CIV), a multisubunit enzyme composed of 14 subunits. The complex is composed of a catalytic core of 3 subunits MT-CO1, MT-CO2 and MT-CO3, encoded in the mitochondrial DNA, and 11 supernumerary subunits COX4I, COX5A, COX5B, COX6A, COX6B, COX6C, COX7A, COX7B, COX7C, COX8 and NDUFA4, which are encoded in the nuclear genome. The complex exists as a monomer or a dimer and forms supercomplexes (SCs) in the inner mitochondrial membrane with NADH-ubiquinone oxidoreductase (complex I, CI) and ubiquinol-cytochrome c oxidoreductase (cytochrome b-c1 complex, complex III, CIII), resulting in different assemblies (supercomplex SCI(1)III(2)IV(1) and megacomplex MCI(2)III(2)IV(2)). Found in a complex with TMEM177, COA6, COX18, COX20, SCO1 and SCO2. Interacts with TMEM177 in a COX20-dependent manner. Interacts with COX20. Interacts with COX16. Requires Cu cation as cofactor.

Its subcellular location is the mitochondrion inner membrane. The catalysed reaction is 4 Fe(II)-[cytochrome c] + O2 + 8 H(+)(in) = 4 Fe(III)-[cytochrome c] + 2 H2O + 4 H(+)(out). Functionally, component of the cytochrome c oxidase, the last enzyme in the mitochondrial electron transport chain which drives oxidative phosphorylation. The respiratory chain contains 3 multisubunit complexes succinate dehydrogenase (complex II, CII), ubiquinol-cytochrome c oxidoreductase (cytochrome b-c1 complex, complex III, CIII) and cytochrome c oxidase (complex IV, CIV), that cooperate to transfer electrons derived from NADH and succinate to molecular oxygen, creating an electrochemical gradient over the inner membrane that drives transmembrane transport and the ATP synthase. Cytochrome c oxidase is the component of the respiratory chain that catalyzes the reduction of oxygen to water. Electrons originating from reduced cytochrome c in the intermembrane space (IMS) are transferred via the dinuclear copper A center (CU(A)) of subunit 2 and heme A of subunit 1 to the active site in subunit 1, a binuclear center (BNC) formed by heme A3 and copper B (CU(B)). The BNC reduces molecular oxygen to 2 water molecules using 4 electrons from cytochrome c in the IMS and 4 protons from the mitochondrial matrix. This Pelomedusa subrufa (African side-necked turtle) protein is Cytochrome c oxidase subunit 2 (MT-CO2).